The following is a 541-amino-acid chain: Chaperonin GroEL (541 aa).

ATP-binding positions include 29-32, 86-90, Gly413, 477-479, and Asp493; these read TLGP, DGTTT, and DAL.

Belongs to the chaperonin (HSP60) family. As to quaternary structure, forms a cylinder of 14 subunits composed of two heptameric rings stacked back-to-back. Interacts with the co-chaperonin GroES.

Its subcellular location is the cytoplasm. It carries out the reaction ATP + H2O + a folded polypeptide = ADP + phosphate + an unfolded polypeptide.. In terms of biological role, together with its co-chaperonin GroES, plays an essential role in assisting protein folding. The GroEL-GroES system forms a nano-cage that allows encapsulation of the non-native substrate proteins and provides a physical environment optimized to promote and accelerate protein folding. The chain is Chaperonin GroEL from Clostridium botulinum (strain Loch Maree / Type A3).